The sequence spans 448 residues: Death-associated protein kinase 3 (448 aa).

One can recognise a Protein kinase domain in the interval 13–275 (YEMGEELGSG…IAQSLEHSWI (263 aa)). Residues 19-27 (LGSGQFAIV) and Lys-42 each bind ATP. Asp-139 serves as the catalytic Proton acceptor. The interval 161 to 204 (DFGIAHRIEAGSEFKNIFGTPEFVAPEIVNYEPLGLEADMWSIG) is activation segment. Phosphothreonine is present on residues Thr-180 and Thr-225. Thr-265 bears the Phosphothreonine; by autocatalysis mark. Thr-265 carries the phosphothreonine; by ROCK1 modification. A Phosphoserine; by DAPK1 modification is found at Ser-304. The residue at position 306 (Ser-306) is a Phosphoserine; by autocatalysis and DAPK1. A phosphoserine; by DAPK1 mark is found at Ser-307, Ser-313, and Ser-321. An interaction with CDC5L region spans residues 390–448 (AQEEARAALLGAGGLKRRLCRLENRYDALAAQVAAEVQFVRDLVRALEQERLQAECGVR). A required for interaction with ATF4 but not with PAWR region spans residues 418 to 448 (LAAQVAAEVQFVRDLVRALEQERLQAECGVR). Residues 422-436 (VAAEVQFVRDLVRAL) are leucine-zipper.

It belongs to the protein kinase superfamily. CAMK Ser/Thr protein kinase family. DAP kinase subfamily. Homooligomer in its kinase-active form (homotrimers and homodimers are reported); monomeric in its kinase-inactive form. Homodimerization is required for activation segment autophosphorylation. Interacts with DAXX, ATF4, NLK, TCF7L2, UBE2D1, UBE2D2, UBE2D3 and CDC5L. Interacts with PAWR; also demonstrated in aorta smooth muscle cells indicative for the cytoskeletal targeting function of PAWR. Interacts with AR; enhanced by AATF. Interacts with LUZP1; the interaction is likely to occur throughout the cell cycle and reduces the LUZP1-mediated suppression of MYL9 phosphorylation. It depends on Mg(2+) as a cofactor. In terms of processing, ubiquitinated. Ubiquitination mediated by the UBE2D3 E3 ligase does not lead to proteasomal degradation, but influences promyelocytic leukemia protein nuclear bodies (PML-NBs) formation in the nucleus. The phosphorylation status is critical for kinase activity, oligomerization and intracellular localization. Phosphorylation at Thr-180, Thr-225 and Thr-265 is essential for activity. The phosphorylated form is localized in the cytoplasm and nuclear translocation or retention is maximal when it is not phosphorylated. Phosphorylation increases the trimeric form, and its dephosphorylation favors a kinase-inactive monomeric form. Ubiquitously expressed in all tissue types examined. High levels in brain, heart, lung and spleen, lower expression in kidney, liver, skeletal muscle and testis. Isoform 2 is expressed in the smooth muscle.

It localises to the nucleus. The protein resides in the PML body. Its subcellular location is the cytoplasm. It is found in the cytoskeleton. The protein localises to the microtubule organizing center. It localises to the chromosome. The protein resides in the centromere. Its subcellular location is the spindle. It is found in the midbody. It carries out the reaction L-seryl-[protein] + ATP = O-phospho-L-seryl-[protein] + ADP + H(+). The catalysed reaction is L-threonyl-[protein] + ATP = O-phospho-L-threonyl-[protein] + ADP + H(+). With respect to regulation, a sequential activation is proposed: autophosphorylation at consensus sites is leading to dimerization of the catalytic domain and activation segment exchange (producing an active confirmation of both kinase modules in trans) followed by phosphorylation at Thr-180 in the activation segment and at other regulatory sites. Phosphorylation at Thr-180, Thr-225 and Thr-265 is essential for activity. Inhibited by pyridone 6 (K00225), a potent, ATP-competitive inhibitor. Phosphorylation at Thr-180, Thr-225 and Thr-265 is essential for activity. Its function is as follows. Serine/threonine kinase which is involved in the regulation of apoptosis, autophagy, transcription, translation and actin cytoskeleton reorganization. Regulates both type I (caspase-dependent) apoptotic and type II (caspase-independent) autophagic cell deaths signal, depending on the cellular setting. Involved in formation of promyelocytic leukemia protein nuclear body (PML-NB). Involved in apoptosis involving PAWR which mediates cytoplasmic relocation; in vitro phosphorylates PAWR. Regulates myosin phosphorylation in both smooth muscle and non-muscle cells. In smooth muscle, regulates myosin either directly by phosphorylating MYL12B and MYL9 or through inhibition of smooth muscle myosin phosphatase (SMPP1M) via phosphorylation of PPP1R12A; the inhibition of SMPP1M functions to enhance muscle responsiveness to Ca(2+) and promote a contractile state. Phosphorylates MYL12B in non-muscle cells leading to reorganization of actin cytoskeleton such as in regulation of cell polarity and cell migration. Positively regulates canonical Wnt/beta-catenin signaling through interaction with NLK and TCF7L2; disrupts the NLK-TCF7L2 complex thereby influencing the phosphorylation of TCF7L2 by NLK. Phosphorylates RPL13A on 'Ser-77' upon interferon-gamma activation which is causing RPL13A release from the ribosome, RPL13A association with the GAIT complex and its subsequent involvement in transcript-selective translation inhibition. Phosphorylates STAT3 and enhances its transcriptional activity. Enhances transcription from AR-responsive promoters in a hormone- and kinase-dependent manner. Phosphorylates histone H3 on 'Thr-11' at centromeres during mitosis. The chain is Death-associated protein kinase 3 (Dapk3) from Rattus norvegicus (Rat).